Here is a 116-residue protein sequence, read N- to C-terminus: PTS system cellobiose-specific EIIA component (116 aa).

A PTS EIIA type-3 domain is found at 11–109 (DDYMGVVMGI…AVEVVGQEQR (99 aa)). His-85 serves as the catalytic Tele-phosphohistidine intermediate. His-85 carries the post-translational modification Phosphohistidine; by HPr. Asp-88 is a Mg(2+) binding site.

Homotrimer. Requires Mg(2+) as cofactor.

In terms of biological role, the phosphoenolpyruvate-dependent sugar phosphotransferase system (sugar PTS), a major carbohydrate active transport system, catalyzes the phosphorylation of incoming sugar substrates concomitantly with their translocation across the cell membrane. Involved in cellobiose transport with PtcB and CelB. This system can also transport lactose. This is PTS system cellobiose-specific EIIA component from Lactococcus lactis subsp. lactis (strain IL1403) (Streptococcus lactis).